The chain runs to 244 residues: Ribosomal RNA small subunit methyltransferase G (244 aa).

Residues glycine 79, phenylalanine 84, 102–104, 130–131, and arginine 149 each bind S-adenosyl-L-methionine; these read DST and AE. Residues 225-244 form a disordered region; it reads DRYPRREGVPNQQPLFWSAK. Residues 234 to 244 are compositionally biased toward polar residues; it reads PNQQPLFWSAK.

The protein belongs to the methyltransferase superfamily. RNA methyltransferase RsmG family.

The protein localises to the cytoplasm. In terms of biological role, specifically methylates the N7 position of a guanine in 16S rRNA. This chain is Ribosomal RNA small subunit methyltransferase G, found in Deinococcus deserti (strain DSM 17065 / CIP 109153 / LMG 22923 / VCD115).